The following is a 494-amino-acid chain: MGIGKDGTLPWKLPGDLKFFKDITVTTSDPSKKNAVVMGRKTWESIPLKFRPLPGRLNVILTRSGSFDFATAENVVICGSLDSALQLLATTPYCLTVEKTFIIGGGEILRQSLNAPACEAIHLTDIESSIECDTFIPPIDLSMFHPWYSSFPVVENGIKHSFISFVRVTKSIAEANDSSGKELTGNDSKKVKFEIENFSFLPKMIFERHEEYQYLNLVQDIIRNGAKKNDRTGTGTVSKFGCQMRFNLRRNFPLLTTKRVFWRGVLEELLWFISGSTNAKVLQEKGIHIWDGNASRQYLDSIGLTQREEGDLGPVYGFQWRHFGAEYTDMHADYVGKGFDQLMDVIDKIKNNPDDRRIILSAWNPTDLKKMALPPCHMFAQFYVENGELSCQMYQRSADMGLGVPFNIASYSLLTCMIAQVCDLSPGDFVHVIGDAHVYRTHVEALEEQMRKQPKPFPILKINPVKKDIDSFVTSDFKLVRYDPHHKIEMKMAV.

Residues 1 to 167 (MGIGKDGTLP…IKHSFISFVR (167 aa)) form the DHFR domain. NADP(+) is bound at residue 2–8 (GIGKDGT). Asp-16 is a substrate binding site. NADP(+) contacts are provided by residues 40-42 (RKT) and 61-64 (LTRS). Ile-103 lines the substrate pocket. 104–111 (GGGEILRQ) is an NADP(+) binding site. Position 124 (Thr-124) interacts with substrate. The interval 170–494 (KSIAEANDSS…HHKIEMKMAV (325 aa)) is thymidylate synthase. Residue Arg-231 coordinates dUMP. The active site involves Cys-376. DUMP is bound by residues His-377, 395–399 (QRSAD), Asn-407, and 437–439 (HVY).

In the N-terminal section; belongs to the dihydrofolate reductase family. This sequence in the C-terminal section; belongs to the thymidylate synthase family.

It carries out the reaction (6S)-5,6,7,8-tetrahydrofolate + NADP(+) = 7,8-dihydrofolate + NADPH + H(+). The enzyme catalyses dUMP + (6R)-5,10-methylene-5,6,7,8-tetrahydrofolate = 7,8-dihydrofolate + dTMP. It participates in cofactor biosynthesis; tetrahydrofolate biosynthesis; 5,6,7,8-tetrahydrofolate from 7,8-dihydrofolate: step 1/1. In terms of biological role, bifunctional enzyme. Involved in de novo dTMP biosynthesis. Key enzyme in folate metabolism. Can play two different roles depending on the source of dihydrofolate: de novo synthesis of tetrahydrofolate or recycling of the dihydrofolate released as one of the end products of the TS catalyzed reaction. Catalyzes an essential reaction for de novo glycine and purine synthesis, DNA precursor synthesis, and for the conversion of dUMP to dTMP. This is Putative bifunctional dihydrofolate reductase-thymidylate synthase from Oryza sativa subsp. japonica (Rice).